The primary structure comprises 228 residues: Sodium channel regulatory subunit beta-4 (228 aa).

An N-terminal signal peptide occupies residues 1-30 (MPGARDQGAARARWLGIGLLGLFLLPVSLS). An Ig-like C2-type domain is found at 31–148 (LEVSVGKATT…NDFQHQATIF (118 aa)). At 31–162 (LEVSVGKATT…DKLEEVDNTV (132 aa)) the chain is on the extracellular side. N-linked (GlcNAc...) asparagine glycans are attached at residues N45, N71, and N113. C53 and C131 are joined by a disulfide. Residues 163–183 (TLIILGVVGGVIGLLIFILLV) traverse the membrane as a helical segment. Residues 184–228 (KKFIAFIIKKTQEKKKECLVSSSGNDNTENGLPGSKAEEKAPTKV) are Cytoplasmic-facing. The tract at residues 198–228 (KKECLVSSSGNDNTENGLPGSKAEEKAPTKV) is disordered. The span at 203–213 (VSSSGNDNTEN) shows a compositional bias: polar residues. The span at 219-228 (KAEEKAPTKV) shows a compositional bias: basic and acidic residues.

The protein belongs to the sodium channel auxiliary subunit SCN4B (TC 8.A.17) family. As to quaternary structure, a voltage-gated sodium (Nav) channel consists of an ion-conducting pore-forming alpha subunit functional on its own that is regulated by one or more beta subunits. The beta subunit SCN4B is disulfide-linked to the pore-forming alpha subunit. Interacts with SCN1A; regulatory subunit of SCN1A/Nav1.1. Interacts with SCN2A; regulatory subunit of SCN2A/Nav1.2. Post-translationally, contains an interchain disulfide bond with SCN2A.

The protein localises to the cell membrane. Functionally, regulatory subunit of multiple voltage-gated sodium (Nav) channels directly mediating the depolarization of excitable membranes. Navs, also called VGSCs (voltage-gated sodium channels) or VDSCs (voltage-dependent sodium channels), operate by switching between closed and open conformations depending on the voltage difference across the membrane. In the open conformation they allow Na(+) ions to selectively pass through the pore, along their electrochemical gradient. The influx of Na+ ions provokes membrane depolarization, initiating the propagation of electrical signals throughout cells and tissues. The accessory beta subunits participate in localization and functional modulation of the Nav channels. Modulates the activity of SCN1A/Nav1.1. Modulates the activity of SCN2A/Nav1.2. This chain is Sodium channel regulatory subunit beta-4, found in Bos taurus (Bovine).